The primary structure comprises 952 residues: Glycine dehydrogenase (decarboxylating) (952 aa).

Lys696 carries the post-translational modification N6-(pyridoxal phosphate)lysine.

Belongs to the GcvP family. As to quaternary structure, the glycine cleavage system is composed of four proteins: P, T, L and H. Requires pyridoxal 5'-phosphate as cofactor.

The enzyme catalyses N(6)-[(R)-lipoyl]-L-lysyl-[glycine-cleavage complex H protein] + glycine + H(+) = N(6)-[(R)-S(8)-aminomethyldihydrolipoyl]-L-lysyl-[glycine-cleavage complex H protein] + CO2. Functionally, the glycine cleavage system catalyzes the degradation of glycine. The P protein binds the alpha-amino group of glycine through its pyridoxal phosphate cofactor; CO(2) is released and the remaining methylamine moiety is then transferred to the lipoamide cofactor of the H protein. The polypeptide is Glycine dehydrogenase (decarboxylating) (Pelagibacter ubique (strain HTCC1062)).